A 394-amino-acid polypeptide reads, in one-letter code: Elongation factor Tu, mitochondrial (394 aa).

Residues 10 to 204 (KPHCNIGTIG…AVDNYIPQPE (195 aa)) enclose the tr-type G domain. The G1 stretch occupies residues 19–26 (GHVDHGKT). 19-26 (GHVDHGKT) is a binding site for GTP. The tract at residues 60–64 (GITIS) is G2. The interval 81 to 84 (DCPG) is G3. Residues 81 to 85 (DCPGH) and 136 to 139 (NKVD) each bind GTP. The G4 stretch occupies residues 136-139 (NKVD). The segment at 174–176 (SAL) is G5.

It belongs to the TRAFAC class translation factor GTPase superfamily. Classic translation factor GTPase family. EF-Tu/EF-1A subfamily.

It localises to the mitochondrion. Its function is as follows. This protein promotes the GTP-dependent binding of aminoacyl-tRNA to the A-site of ribosomes during protein biosynthesis. This is Elongation factor Tu, mitochondrial (TUFA) from Reclinomonas americana.